Consider the following 602-residue polypeptide: FAD-binding monooxygenase hmp7 (602 aa).

FAD is bound by residues Thr108 to Trp111, Asp120 to Val121, and Tyr126. Gln118–Asp120 serves as a coordination point for NADP(+). Residues Thr252–Gln258 and Arg275–Thr276 each bind NADP(+).

It belongs to the FAD-binding monooxygenase family. It depends on FAD as a cofactor.

It functions in the pathway secondary metabolite biosynthesis. Its function is as follows. FAD-binding monooxygenase; part of the gene cluster that mediates the biosynthesis of hypothemycin, a resorcylic acid lactone (RAL) that irreversibly inhibits a subset of protein kinases with a conserved cysteine in the ATP binding site such as human ERK2. The first step is performed by both PKSs hmp3 and hmp8 and leads to the production of 7',8'-dehydrozearalenol (DHZ). The highly reducing PKS hpm8 synthesizes the reduced hexaketide (7S,11S,2E,8E)-7,11-dihydroxy-dodeca-2,8-dienoate, which is transferred downstream to the non-reducing PKS hpm3. Hpm3 then extends the reduced hexaketide to a nonaketide, after which regioselective cyclization and macrolactonization affords DHZ. The next step is the conversion of DHZ into aigialomycin C and is performed by the O-methyltransferase hmp5, the FAD-binding monooxygenase hmp7, and the cytochrome P450 monooxygenase hmp1. The wide substrate tolerance of the hmp5 and hmp7 implies that the reactions from DHZ to aigialomycin C can occur in any order. The steps from aigialomycin C to hypothemycin are less well established. The FAD-linked oxidoreductase hmp9 presumably catalyzes oxidation of the C-6' hydroxyl to a ketone. The timing of this oxidation is important, since the resulting enone functional group is a Michael acceptor that can react spontaneously with glutathione, an abundant metabolite in fungal cells. The glutathione S-transferase hmp2 catalyzes cis-trans isomerization of the 7',8' double bond with equilibrium favoring the trans isomer. The hpm6-encoded transporter might preferentially pump hypothemycin out of the cell relative to the trans isomer aigialomycin A. The cis-to-trans isomerization may be coupled with C-4' hydroxylation, since all known hypothemycin analogs containing the enone functional group also have hydroxyl groups at both C-4' and C-5'. The protein is FAD-binding monooxygenase hmp7 of Hypomyces subiculosus (Nectria subiculosa).